The chain runs to 327 residues: Protoheme IX farnesyltransferase (327 aa).

A run of 7 helical transmembrane segments spans residues 55 to 75, 101 to 121, 124 to 144, 152 to 172, 180 to 200, 237 to 257, and 278 to 298; these read LVCT…LNCL, AAFV…VSGV, LAAG…TALL, IVVG…AATG, WLFA…ALLL, FLGI…ILPF, and AKGL…LLVM.

This sequence belongs to the UbiA prenyltransferase family. Protoheme IX farnesyltransferase subfamily.

The protein resides in the cell inner membrane. It catalyses the reaction heme b + (2E,6E)-farnesyl diphosphate + H2O = Fe(II)-heme o + diphosphate. The protein operates within porphyrin-containing compound metabolism; heme O biosynthesis; heme O from protoheme: step 1/1. Converts heme B (protoheme IX) to heme O by substitution of the vinyl group on carbon 2 of heme B porphyrin ring with a hydroxyethyl farnesyl side group. In Synechococcus sp. (strain CC9311), this protein is Protoheme IX farnesyltransferase.